A 313-amino-acid polypeptide reads, in one-letter code: 4-hydroxy-3-methylbut-2-enyl diphosphate reductase (313 aa).

[4Fe-4S] cluster is bound at residue cysteine 13. (2E)-4-hydroxy-3-methylbut-2-enyl diphosphate-binding residues include histidine 41 and histidine 75. Residues histidine 41 and histidine 75 each contribute to the dimethylallyl diphosphate site. Isopentenyl diphosphate is bound by residues histidine 41 and histidine 75. Cysteine 97 is a binding site for [4Fe-4S] cluster. Position 125 (histidine 125) interacts with (2E)-4-hydroxy-3-methylbut-2-enyl diphosphate. Histidine 125 serves as a coordination point for dimethylallyl diphosphate. Histidine 125 is an isopentenyl diphosphate binding site. The active-site Proton donor is the glutamate 127. (2E)-4-hydroxy-3-methylbut-2-enyl diphosphate is bound at residue threonine 168. Cysteine 218 lines the [4Fe-4S] cluster pocket. 4 residues coordinate (2E)-4-hydroxy-3-methylbut-2-enyl diphosphate: serine 246, serine 247, asparagine 248, and serine 295. Residues serine 246, serine 247, asparagine 248, and serine 295 each contribute to the dimethylallyl diphosphate site. Isopentenyl diphosphate-binding residues include serine 246, serine 247, asparagine 248, and serine 295.

Belongs to the IspH family. [4Fe-4S] cluster is required as a cofactor.

It catalyses the reaction isopentenyl diphosphate + 2 oxidized [2Fe-2S]-[ferredoxin] + H2O = (2E)-4-hydroxy-3-methylbut-2-enyl diphosphate + 2 reduced [2Fe-2S]-[ferredoxin] + 2 H(+). The enzyme catalyses dimethylallyl diphosphate + 2 oxidized [2Fe-2S]-[ferredoxin] + H2O = (2E)-4-hydroxy-3-methylbut-2-enyl diphosphate + 2 reduced [2Fe-2S]-[ferredoxin] + 2 H(+). Its pathway is isoprenoid biosynthesis; dimethylallyl diphosphate biosynthesis; dimethylallyl diphosphate from (2E)-4-hydroxy-3-methylbutenyl diphosphate: step 1/1. It functions in the pathway isoprenoid biosynthesis; isopentenyl diphosphate biosynthesis via DXP pathway; isopentenyl diphosphate from 1-deoxy-D-xylulose 5-phosphate: step 6/6. Functionally, catalyzes the conversion of 1-hydroxy-2-methyl-2-(E)-butenyl 4-diphosphate (HMBPP) into a mixture of isopentenyl diphosphate (IPP) and dimethylallyl diphosphate (DMAPP). Acts in the terminal step of the DOXP/MEP pathway for isoprenoid precursor biosynthesis. This Chlorobium phaeovibrioides (strain DSM 265 / 1930) (Prosthecochloris vibrioformis (strain DSM 265)) protein is 4-hydroxy-3-methylbut-2-enyl diphosphate reductase.